The sequence spans 241 residues: Zinc finger CCHC domain-containing protein 24 (241 aa).

Phosphoserine is present on residues Ser-65 and Ser-93. Residues 132 to 149 form a CCHC-type zinc finger; the sequence is YLCHLCFNKGHYIKDCPQ.

This chain is Zinc finger CCHC domain-containing protein 24 (ZCCHC24), found in Macaca fascicularis (Crab-eating macaque).